Reading from the N-terminus, the 551-residue chain is MSSQVLASSQLSDKIIARPTTNFHPSIWGDRFLHYNVSEQDLVCKQERIEELIQVVKKEILSSNHDQLKLIDNLQRLGLSHHFESEIEKLLEQLSIGTHHQNHQDLHDASLWFRLLRQHGLNVSSSIFEKFKDDEGNFKKSLITDVSGLLSLYEASHLSYVGESILDEALAFTTTHLKSIVANSKNHPLSHQISKALERPLRMTLERLHARFYISIYEKDASHNKVLLELAKLDFNLLQCFHKKELSEIVRWWKEHEFAKKFPFARDRMVELYFWILGVYYEPKYSRARKLLTKVIALTSITDDIYDAYGTIDELQLLTKAMQRWDINCMDKLEPEYLKTYYKVMLESYEEFEKELKKEELYKLEYAKEEMKRIIRAYFEEARWLNEGYLPSFDEHLRVSYISSGYVLLIATSYVGMDDIVTHETLNWLSKDPKIVSASTLLSRFMDDIGSRKFEQERNHVLSTVECYMKQYEVSEEEAVKELNKRVANCWKEINEDFIRPTSVPFPILFRIINLTKTADFMYREGGDQYTHVGKMLKDSIAALLIDPIPL.

Residues arginine 266, aspartate 303, aspartate 307, arginine 444, and aspartate 447 each contribute to the (2E,6E)-farnesyl diphosphate site. The Mg(2+) site is built by aspartate 303 and aspartate 307. The DDXXD motif signature appears at 303 to 307 (DDIYD). Positions 447, 451, and 455 each coordinate Mg(2+).

This sequence belongs to the terpene synthase family. Tpsb subfamily. Requires Mg(2+) as cofactor. Mn(2+) serves as cofactor.

The catalysed reaction is (2E,6E)-farnesyl diphosphate = delta-selinene + diphosphate. The enzyme catalyses (2E)-geranyl diphosphate = beta-myrcene + diphosphate. It catalyses the reaction (2E)-geranyl diphosphate = (4S)-limonene + diphosphate. It carries out the reaction (2E,6E)-farnesyl diphosphate + H2O = selina-6-en-4-ol + diphosphate. It functions in the pathway secondary metabolite biosynthesis; terpenoid biosynthesis. In terms of biological role, involved in sesquiterpene olefins biosynthesis, constituants of cannabinoids and terpenoids-rich resins. Catalyzes mainly the conversion of (2E)-farnesyl diphosphate to delta-selinene, and also produces minor products such as selina-6-en-4-ol. Can also use (2E)-geranyl diphosphate as substrate with low efficiency, producing minor amounts of myrcene and limonene. This is Delta-selinene synthase TPS7FN from Cannabis sativa (Hemp).